The chain runs to 128 residues: Small ribosomal subunit protein eS8 (128 aa).

It belongs to the eukaryotic ribosomal protein eS8 family. Part of the 30S ribosomal subunit.

In Methanococcus maripaludis (strain C7 / ATCC BAA-1331), this protein is Small ribosomal subunit protein eS8.